Here is a 298-residue protein sequence, read N- to C-terminus: Bifunctional protein FolD (298 aa).

Residues 167–169 (GRS), Ser192, and Ile233 contribute to the NADP(+) site.

This sequence belongs to the tetrahydrofolate dehydrogenase/cyclohydrolase family. In terms of assembly, homodimer.

It carries out the reaction (6R)-5,10-methylene-5,6,7,8-tetrahydrofolate + NADP(+) = (6R)-5,10-methenyltetrahydrofolate + NADPH. The enzyme catalyses (6R)-5,10-methenyltetrahydrofolate + H2O = (6R)-10-formyltetrahydrofolate + H(+). Its pathway is one-carbon metabolism; tetrahydrofolate interconversion. Its function is as follows. Catalyzes the oxidation of 5,10-methylenetetrahydrofolate to 5,10-methenyltetrahydrofolate and then the hydrolysis of 5,10-methenyltetrahydrofolate to 10-formyltetrahydrofolate. This is Bifunctional protein FolD from Caulobacter sp. (strain K31).